Here is a 160-residue protein sequence, read N- to C-terminus: MPLELDLQVASDAADLPSEAQFRAWCELALRQRAESELTIRLVDEAEGLELNSTYRHKDYATNVLSFPADVPEEFLDIPLLGDLVICAPVVAREAREQHKPLQAHWAHLVIHGCLHLLGYDHIDDAEAEEMETLERELLAELGHPDPYACDDEEPPSKEK.

3 residues coordinate Zn(2+): His112, His116, and His122. The disordered stretch occupies residues Glu141–Lys160.

It belongs to the endoribonuclease YbeY family. Zn(2+) is required as a cofactor.

It is found in the cytoplasm. In terms of biological role, single strand-specific metallo-endoribonuclease involved in late-stage 70S ribosome quality control and in maturation of the 3' terminus of the 16S rRNA. This chain is Endoribonuclease YbeY, found in Pseudomonas paraeruginosa (strain DSM 24068 / PA7) (Pseudomonas aeruginosa (strain PA7)).